A 618-amino-acid polypeptide reads, in one-letter code: Dihydroxy-acid dehydratase (618 aa).

Asp-81 lines the Mg(2+) pocket. Cys-122 is a binding site for [2Fe-2S] cluster. 2 residues coordinate Mg(2+): Asp-123 and Lys-124. At Lys-124 the chain carries N6-carboxylysine. Cys-197 is a binding site for [2Fe-2S] cluster. Residue Glu-493 coordinates Mg(2+). Ser-519 (proton acceptor) is an active-site residue.

It belongs to the IlvD/Edd family. In terms of assembly, homodimer. It depends on [2Fe-2S] cluster as a cofactor. The cofactor is Mg(2+).

It carries out the reaction (2R)-2,3-dihydroxy-3-methylbutanoate = 3-methyl-2-oxobutanoate + H2O. The enzyme catalyses (2R,3R)-2,3-dihydroxy-3-methylpentanoate = (S)-3-methyl-2-oxopentanoate + H2O. The protein operates within amino-acid biosynthesis; L-isoleucine biosynthesis; L-isoleucine from 2-oxobutanoate: step 3/4. Its pathway is amino-acid biosynthesis; L-valine biosynthesis; L-valine from pyruvate: step 3/4. Functionally, functions in the biosynthesis of branched-chain amino acids. Catalyzes the dehydration of (2R,3R)-2,3-dihydroxy-3-methylpentanoate (2,3-dihydroxy-3-methylvalerate) into 2-oxo-3-methylpentanoate (2-oxo-3-methylvalerate) and of (2R)-2,3-dihydroxy-3-methylbutanoate (2,3-dihydroxyisovalerate) into 2-oxo-3-methylbutanoate (2-oxoisovalerate), the penultimate precursor to L-isoleucine and L-valine, respectively. This is Dihydroxy-acid dehydratase from Bordetella avium (strain 197N).